Here is a 418-residue protein sequence, read N- to C-terminus: E3 ubiquitin-protein ligase pellino homolog 1 (418 aa).

Residues 13–200 (APVKYGELIV…MHPRNGFTED (188 aa)) enclose the FHA; atypical domain. S121 carries the phosphoserine modification. T127 is modified (phosphothreonine). The interval 311-399 (CGHVHGYHNW…TFHAACPFCA (89 aa)) is ring-like domain; necessary for ubiquitination of RIPK3.

It belongs to the pellino family. As to quaternary structure, interacts with MAP3K7. Upon IL1B treatment, forms a complex with TRAF6, IRAK1, IRAK4 and MYD88; this complex recruits MAP3K7/TAK1, TAB1 and TAB2 to mediate NF-kappa-B activation. Direct binding of SMAD6 to PELI1 prevents the complex formation and hence negatively regulates IL1R-TLR signaling and eventually NF-kappa-B-mediated gene expression. Interacts (via atypical FHA domain) with RIPK3. Binds preferentially to the 'Thr-182' phosphorylated form of RIPK3. Interacts with RIPK1. In terms of processing, phosphorylation by IRAK1 and IRAK4 enhances its E3 ligase activity. Phosphorylated by ATM in response to DNA damage, promoting localization to DNA double-strand breaks (DSBs) and ability to mediate 'Lys-63'-linked ubiquitination of NBN. Post-translationally, sumoylated.

It localises to the chromosome. The catalysed reaction is S-ubiquitinyl-[E2 ubiquitin-conjugating enzyme]-L-cysteine + [acceptor protein]-L-lysine = [E2 ubiquitin-conjugating enzyme]-L-cysteine + N(6)-ubiquitinyl-[acceptor protein]-L-lysine.. It participates in protein modification; protein ubiquitination. E3 ubiquitin ligase catalyzing the covalent attachment of ubiquitin moieties onto substrate proteins. Involved in the TLR and IL-1 signaling pathways via interaction with the complex containing IRAK kinases and TRAF6. Acts as a positive regulator of inflammatory response in microglia through activation of NF-kappa-B and MAP kinase. Mediates 'Lys-63'-linked polyubiquitination of IRAK1 allowing subsequent NF-kappa-B activation. Conjugates 'Lys-63'-linked ubiquitin chains to the adapter protein ASC/PYCARD, which in turn is crucial for NLRP3 inflammasome activation. Mediates 'Lys-48'-linked polyubiquitination of RIPK3 leading to its subsequent proteasome-dependent degradation; preferentially recognizes and mediates the degradation of the 'Thr-182' phosphorylated form of RIPK3. Negatively regulates necroptosis by reducing RIPK3 expression. Mediates 'Lys-63'-linked ubiquitination of RIPK1. Following phosphorylation by ATM, catalyzes 'Lys-63'-linked ubiquitination of NBN, promoting DNA repair via homologous recombination. Negatively regulates activation of the metabolic mTORC1 signaling pathway by mediating 'Lys-63'-linked ubiquitination of mTORC1-inhibitory protein TSC1 and thereby promoting TSC1/TSC2 complex stability. This chain is E3 ubiquitin-protein ligase pellino homolog 1 (Peli1), found in Mus musculus (Mouse).